The following is a 609-amino-acid chain: UvrABC system protein C (609 aa).

The region spanning 16–94 is the GIY-YIG domain; that stretch reads SSAGVYRMYD…IKQYMPKYNV (79 aa). The UVR domain maps to 203–238; it reads QQVISALVDKMELAAERQAYEQAARFRDQIMALRKV.

Belongs to the UvrC family. Interacts with UvrB in an incision complex.

Its subcellular location is the cytoplasm. Functionally, the UvrABC repair system catalyzes the recognition and processing of DNA lesions. UvrC both incises the 5' and 3' sides of the lesion. The N-terminal half is responsible for the 3' incision and the C-terminal half is responsible for the 5' incision. The protein is UvrABC system protein C of Shewanella baltica (strain OS155 / ATCC BAA-1091).